Here is a 544-residue protein sequence, read N- to C-terminus: Cannabidiolic acid synthase (544 aa).

A signal peptide spans 1–28 (MKCSTFSFWFVCKIIFFFFSFNIQTSIA). C37 and C99 are disulfide-bonded. N45 and N65 each carry an N-linked (GlcNAc...) asparagine glycan. The FAD-binding PCMH-type domain maps to 77–251 (TTPKPLVIVT…VAWKIRLVAV (175 aa)). Residues 109–115 (TRSGGHD) and S120 contribute to the FAD site. Residues 114–176 (HDSEGMSYIS…ENLSLAAGYC (63 aa)) constitute a cross-link (6-(S-cysteinyl)-8alpha-(pros-histidyl)-FAD (His-Cys)). N168 carries an N-linked (GlcNAc...) asparagine glycan. FAD contacts are provided by residues C176, 180-184 (CAGGH), Y190, E236, and I241. A cannabigerolate-binding site is contributed by H291. 3 N-linked (GlcNAc...) asparagine glycosylation sites follow: N296, N304, and N328. Residues Y416 and E441 each contribute to the cannabigerolate site. 480–482 (YLN) provides a ligand contact to FAD. Y483 functions as the Proton acceptor in the catalytic mechanism. N498 carries an N-linked (GlcNAc...) asparagine glycan.

Belongs to the oxygen-dependent FAD-linked oxidoreductase family. Monomer. FAD is required as a cofactor. In terms of processing, glycosylated. The FAD cofactor is bound via a bicovalent 6-S-cysteinyl, 8alpha-N1-histidyl FAD linkage. In terms of tissue distribution, expressed in young leaves.

The protein localises to the secreted. The protein resides in the extracellular space. It is found in the apoplast. The enzyme catalyses cannabigerolate + O2 = cannabidiolate + H2O2. It participates in secondary metabolite biosynthesis; terpenoid biosynthesis. With respect to regulation, inhibited by Hg(2+). Oxidoreductase involved in the biosynthesis of cannabinoids-related terpenophenolic natural products, which have pharmacological activity. Catalyzes the stereoselective oxidative cyclization of the monoterpene moiety in cannabigerolic acid (CBGA), producing cannabidiolate (CBDA), the major cannabioid in fiber-type Cannabis plants. Can also use cannabinerolic acid as substrate, but not cannabigerol or cannabinerol. This chain is Cannabidiolic acid synthase, found in Cannabis sativa (Hemp).